Consider the following 223-residue polypeptide: Phosphoribosylformylglycinamidine synthase subunit PurQ (223 aa).

In terms of domain architecture, Glutamine amidotransferase type-1 spans phenylalanine 3–valine 223. Catalysis depends on cysteine 85, which acts as the Nucleophile. Residues histidine 193 and glutamate 195 contribute to the active site.

As to quaternary structure, part of the FGAM synthase complex composed of 1 PurL, 1 PurQ and 2 PurS subunits.

The protein resides in the cytoplasm. The enzyme catalyses N(2)-formyl-N(1)-(5-phospho-beta-D-ribosyl)glycinamide + L-glutamine + ATP + H2O = 2-formamido-N(1)-(5-O-phospho-beta-D-ribosyl)acetamidine + L-glutamate + ADP + phosphate + H(+). It catalyses the reaction L-glutamine + H2O = L-glutamate + NH4(+). It functions in the pathway purine metabolism; IMP biosynthesis via de novo pathway; 5-amino-1-(5-phospho-D-ribosyl)imidazole from N(2)-formyl-N(1)-(5-phospho-D-ribosyl)glycinamide: step 1/2. Part of the phosphoribosylformylglycinamidine synthase complex involved in the purines biosynthetic pathway. Catalyzes the ATP-dependent conversion of formylglycinamide ribonucleotide (FGAR) and glutamine to yield formylglycinamidine ribonucleotide (FGAM) and glutamate. The FGAM synthase complex is composed of three subunits. PurQ produces an ammonia molecule by converting glutamine to glutamate. PurL transfers the ammonia molecule to FGAR to form FGAM in an ATP-dependent manner. PurS interacts with PurQ and PurL and is thought to assist in the transfer of the ammonia molecule from PurQ to PurL. This Staphylococcus aureus (strain USA300) protein is Phosphoribosylformylglycinamidine synthase subunit PurQ.